A 201-amino-acid chain; its full sequence is Ras-related protein Rab-9A (201 aa).

The residue at position 2 (Ala2) is an N-acetylalanine. Gly17 is a binding site for GDP. Residues Gly17, Val18, Gly19, Lys20, Ser21, Ser22, Thr34, His38, and Thr39 each coordinate GTP. Residues Gly19, Lys20, Ser21, and Ser22 each coordinate GDP. Ser21 provides a ligand contact to Mg(2+). The short motif at 31 to 42 is the Switch 1 element; sequence KFDTQLFHTIGV. Mg(2+) contacts are provided by Thr39 and Asp62. The short motif at 64 to 78 is the Switch 2 element; sequence AGQERFRSLRTPFYR. Residues Gly65, Asn124, Lys125, and Asp127 each contribute to the GTP site. GDP is bound by residues Asn124, Lys125, Asp127, Ala155, and Lys156. Lys156 is a binding site for GTP. Phosphoserine is present on Ser179. Phosphothreonine is present on Thr187. Residues Cys200 and Cys201 are each lipidated (S-geranylgeranyl cysteine).

Belongs to the small GTPase superfamily. Rab family. Interacts (preferentially in its GTP-bound form) with GCC2 (via its GRIP domain). Interacts (GTP-bound form) with SGSM1; the GDP-bound form has much lower affinity for SGSM1. Interacts with SGSM2. The GTP-bound form but not the GDP-bound form interacts with HPS4 and the BLOC-3 complex (heterodimer of HPS1 and HPS4) but does not interact with HPS1 alone. Interacts (GTP-bound form) with NDE1; two RAB9A-GTP molecules lie on the opposite sides of the NDE1 homodimer; the interaction leads to RAB9A-dynein motor tethering. Interacts (GTP-bound form) with NDEL1. Mg(2+) is required as a cofactor.

The protein resides in the cell membrane. It is found in the endoplasmic reticulum membrane. The protein localises to the golgi apparatus membrane. It localises to the late endosome. Its subcellular location is the cytoplasmic vesicle. The protein resides in the phagosome membrane. It is found in the phagosome. The protein localises to the cytoplasmic vesicle membrane. It localises to the melanosome. It catalyses the reaction GTP + H2O = GDP + phosphate + H(+). With respect to regulation, regulated by guanine nucleotide exchange factors (GEFs) which promote the exchange of bound GDP for free GTP. Regulated by GTPase activating proteins (GAPs) which increase the GTP hydrolysis activity. Inhibited by GDP dissociation inhibitors (GDIs). In terms of biological role, the small GTPases Rab are key regulators of intracellular membrane trafficking, from the formation of transport vesicles to their fusion with membranes. Rabs cycle between an inactive GDP-bound form and an active GTP-bound form that is able to recruit to membranes different sets of downstream effectors directly responsible for vesicle formation, movement, tethering and fusion. RAB9A is involved in the transport of proteins between the endosomes and the trans-Golgi network (TGN). Specifically uses NDE1/NDEL1 as an effector to interact with the dynein motor complex in order to control retrograde trafficking of RAB9-associated late endosomes to the TGN. Involved in the recruitment of SGSM2 to melanosomes and is required for the proper trafficking of melanogenic enzymes TYR, TYRP1 and DCT/TYRP2 to melanosomes in melanocytes. The protein is Ras-related protein Rab-9A (RAB9A) of Canis lupus familiaris (Dog).